A 383-amino-acid chain; its full sequence is Multidrug resistance protein MexA (383 aa).

Positions 1 to 23 are cleaved as a signal peptide; it reads MQRTPAMRVLVPALLVAISALSG. Cysteine 24 carries the N-palmitoyl cysteine lipid modification. The S-diacylglycerol cysteine moiety is linked to residue cysteine 24. A coiled-coil region spans residues 97–151; that stretch reads ATYEADYQSAQANLASTQEQAQRYKLLVADQAVSKQQYADANAAYLQSKAAVEQA.

The protein belongs to the membrane fusion protein (MFP) (TC 8.A.1) family. As to quaternary structure, component of the MexAB-OprM multidrug efflux complex, composed of six MexA subunits forming a hexameric tube, binding to a MexB trimer, which interact with the trimeric OprM outer membrane channel protein. OprM is thought to not directly contact MexB; instead, MexA joins MexB and OprM by forming a funnel-like hexamer anchored to the inner membrane. MexA may initially form a hexameric ring complex with MexB prior to OprM, then OprM undergoes a conformational change as it contacts MexA, allowing the periplasmic gate to open. It is thought that, under high intracellular substrate concentration, MexB ejects substrate into the tunnel formed by MexA-OprM; as the substrate level declines, conformational changes in MexB cause efflux to reduce and stop and the complex shifts to the closed state. MexB subunit acts as a substrate:proton antiporter and activity is enhanced significantly when in complex with MexA and OprM, in vitro.

It localises to the cell inner membrane. Its activity is regulated as follows. Export of antibiotics and solvents is dramatically decreased in the presence of the protonophore carbonyl cyanide m-chlorophenylhydrazone (CCCP), therefore may be driven by a proton gradient. Antibiotic efflux is inhibited by pyridopyrimidine derivatives, such as ABI-PP, acting by binding to a hydrophobic pocket in MexB. Its function is as follows. The periplasmic linker component of the MexAB-OprM efflux system that confers multidrug resistance. Functions as the major efflux pump for n-hexane and p-xylene efflux. Has been shown in one study to be involved in the active efflux of the autoinducer N-(3-oxododecanoyl) homoserine lactone, thereby playing an indirect role in quorum-sensing; but has been shown in another study not to be involved in efflux of this autoinducer. Over-expression of the pump increases antibiotic and solvent efflux capacities. Implicated in the secretion of the siderophore pyoverdine. The sequence is that of Multidrug resistance protein MexA (mexA) from Pseudomonas aeruginosa (strain ATCC 15692 / DSM 22644 / CIP 104116 / JCM 14847 / LMG 12228 / 1C / PRS 101 / PAO1).